A 185-amino-acid polypeptide reads, in one-letter code: Ribosome-recycling factor (185 aa).

Belongs to the RRF family.

The protein resides in the cytoplasm. In terms of biological role, responsible for the release of ribosomes from messenger RNA at the termination of protein biosynthesis. May increase the efficiency of translation by recycling ribosomes from one round of translation to another. This Helicobacter hepaticus (strain ATCC 51449 / 3B1) protein is Ribosome-recycling factor.